Here is a 489-residue protein sequence, read N- to C-terminus: Long chain base biosynthesis protein 2a (489 aa).

The helical transmembrane segment at 2–22 (ITIPYLTAVSTYFSYGLLFAF) threads the bilayer. Lysine 311 carries the N6-(pyridoxal phosphate)lysine modification.

This sequence belongs to the class-II pyridoxal-phosphate-dependent aminotransferase family. As to quaternary structure, heterodimer with LCB1. Component of the serine palmitoyltransferase (SPT) complex, composed of LCB1 and LCB2 (LCB2a or LCB2b). Requires pyridoxal 5'-phosphate as cofactor. Ubiquitous. Detected in leaves, roots, stems, flowers and at a lower level in mature seeds.

Its subcellular location is the endoplasmic reticulum membrane. The enzyme catalyses L-serine + hexadecanoyl-CoA + H(+) = 3-oxosphinganine + CO2 + CoA. It participates in lipid metabolism; sphingolipid metabolism. Functionally, serine palmitoyltransferase (SPT). The heterodimer formed with LCB1 constitutes the catalytic core. Involved in the regulation of the programmed cell death (PCD) signaling pathway. Plays an important role during male gametogenesis and embryogenesis. The sequence is that of Long chain base biosynthesis protein 2a (LCB2a) from Arabidopsis thaliana (Mouse-ear cress).